A 656-amino-acid polypeptide reads, in one-letter code: Protein O1 homolog (656 aa).

A helical transmembrane segment spans residues 544-564 (FIKKVILANVIFEYIFTLIII).

It belongs to the chordopoxvirinae O1 family.

The protein resides in the membrane. This is Protein O1 homolog from Vertebrata (FPV).